Reading from the N-terminus, the 256-residue chain is Uridylate kinase (256 aa).

10–13 provides a ligand contact to ATP; it reads KLSG. G52 provides a ligand contact to UMP. ATP contacts are provided by G53 and R57. UMP-binding positions include D72 and 134–141; that span reads NGQPFLTT. Residues Y168 and D171 each coordinate ATP.

This sequence belongs to the UMP kinase family. Homohexamer.

The protein localises to the cytoplasm. The enzyme catalyses UMP + ATP = UDP + ADP. It functions in the pathway pyrimidine metabolism; CTP biosynthesis via de novo pathway; UDP from UMP (UMPK route): step 1/1. With respect to regulation, inhibited by UTP. Functionally, catalyzes the reversible phosphorylation of UMP to UDP. The protein is Uridylate kinase of Frankia alni (strain DSM 45986 / CECT 9034 / ACN14a).